The chain runs to 270 residues: Urease accessory protein UreD (270 aa).

The protein belongs to the UreD family. In terms of assembly, ureD, UreF and UreG form a complex that acts as a GTP-hydrolysis-dependent molecular chaperone, activating the urease apoprotein by helping to assemble the nickel containing metallocenter of UreC. The UreE protein probably delivers the nickel.

The protein resides in the cytoplasm. Functionally, required for maturation of urease via the functional incorporation of the urease nickel metallocenter. This chain is Urease accessory protein UreD, found in Synechocystis sp. (strain ATCC 27184 / PCC 6803 / Kazusa).